Reading from the N-terminus, the 367-residue chain is MYVFKALAGIVLALVATLAHAERIRDLTSVQGVRENSLIGYGLVVGLDGTGDQTTQTPFTTQTLNNMLSQLGITVPTGTNMQLKNVAAVMVTASYPPFARQGQTIDVVVSSMGNAKSLRGGTLLMTPLKGVDSQVYALAQGNILVGGAGASAGGSSVQVNQLNGGRITNGAIIERELPSQFGAGNTINLQLNDEDFTMAQQITDAINRARGYGSATALDARTVQVRVPSGNSSQVRFLADIQNMEVNVTPQDAKVVINSRTGSVVMNREVTLDSCAVAQGNLSVTVNRQLNVNQPNTPFGGGQTVVTPQTQIDLRQSGGSLQSVRSSANLNSVVRALNALGATPMDLMSILQSMQSAGCLRAKLEII.

The N-terminal stretch at 1–21 is a signal peptide; that stretch reads MYVFKALAGIVLALVATLAHA.

Belongs to the FlgI family. The basal body constitutes a major portion of the flagellar organelle and consists of four rings (L,P,S, and M) mounted on a central rod.

The protein resides in the periplasm. It localises to the bacterial flagellum basal body. Assembles around the rod to form the L-ring and probably protects the motor/basal body from shearing forces during rotation. In Salmonella arizonae (strain ATCC BAA-731 / CDC346-86 / RSK2980), this protein is Flagellar P-ring protein.